Reading from the N-terminus, the 774-residue chain is MRSGGNKYLASLLRCYRDERCKLSGKVIHGFIVRMGMKSDTYLCNRLLDLYIECGDGDYARKVFDEMSVRDVYSWNAFLTFRCKVGDLGEACEVFDGMPERDVVSWNNMISVLVRKGFEEKALVVYKRMVCDGFLPSRFTLASVLSACSKVLDGVFGMRCHGVAVKTGLDKNIFVGNALLSMYAKCGFIVDYGVRVFESLSQPNEVSYTAVIGGLARENKVLEAVQMFRLMCEKGVQVDSVCLSNILSISAPREGCDSLSEIYGNELGKQIHCLALRLGFGGDLHLNNSLLEIYAKNKDMNGAELIFAEMPEVNVVSWNIMIVGFGQEYRSDKSVEFLTRMRDSGFQPNEVTCISVLGACFRSGDVETGRRIFSSIPQPSVSAWNAMLSGYSNYEHYEEAISNFRQMQFQNLKPDKTTLSVILSSCARLRFLEGGKQIHGVVIRTEISKNSHIVSGLIAVYSECEKMEISECIFDDCINELDIACWNSMISGFRHNMLDTKALILFRRMHQTAVLCPNETSFATVLSSCSRLCSLLHGRQFHGLVVKSGYVSDSFVETALTDMYCKCGEIDSARQFFDAVLRKNTVIWNEMIHGYGHNGRGDEAVGLYRKMISSGEKPDGITFVSVLTACSHSGLVETGLEILSSMQRIHGIEPELDHYICIVDCLGRAGRLEDAEKLAEATPYKSSSVLWEILLSSCRVHGDVSLARRVAEKLMRLDPQSSAAYVLLSNTYSSLRQWDDSAALQGLMNKNRVHKTPGQSWTTYGNDLDSGFRK.

20 PPR repeats span residues 5–39 (GNKY…GMKS), 40–70 (DTYL…MSVR), 71–101 (DVYS…MPER), 102–136 (DVVS…GFLP), 137–171 (SRFT…GLDK), 172–203 (NIFV…LSQP), 204–238 (NEVS…GVQV), 239–270 (DSVC…LGKQ), 283–313 (DLHL…MPEV), 314–348 (NVVS…GFQP), 349–379 (NEVT…IPQP), 380–414 (SVSA…NLKP), 415–449 (DKTT…EISK), 450–480 (NSHI…CINE), 482–516 (DIAC…AVLC), 518–552 (NETS…GYVS), 553–583 (DSFV…VLRK), 584–618 (NTVI…GEKP), 619–654 (DGIT…GIEP), and 655–685 (ELDH…TPYK). Positions 690–765 (LWEILLSSCR…TPGQSWTTYG (76 aa)) are type E motif.

The protein belongs to the PPR family. PCMP-E subfamily.

The protein is Pentatricopeptide repeat-containing protein At4g20770 (PCMP-E35) of Arabidopsis thaliana (Mouse-ear cress).